Reading from the N-terminus, the 981-residue chain is METKGYHSLPEGLDMERRWSQVSQTLERSSLGPAERTTENNYMEIVNVSCVSGAIPNNSTQGSSKEKHELLPYIQQDNSRSGILPSDIKTELESKELSATVAESMGLYMDSVRDAEYTYDQQNQQGSLSPTKIYQNMEQLVKFYKENGHRSSTLSAMSRPLRSFMPDSAASMNGGALRAIVKSPIICHEKSSSVSSPLNMASSVCSPVGINSMSSSTTSFGSFPVHSPITQGTSLTCSPSVENRGSRSHSPTHASNVGSPLSSPLSSMKSPISSPPSHCSVKSPVSSPNNVPLRSSVSSPANLNNSRCSVSSPSNNTNNRSTLSSPTASTVGSIGSPISNAFSYATSGASAGAGAIQDVVPSPDTHEKGAHDVPFPKTEEVEKAISNGVTGPLNIVQYIKSEPDGAFSSSCLGGNSKISPSSPFSVPIKQESSKHSCSGASFKGNPTVNPFPFMDGSYFSFMDDKDYYSLSGILGPPVPGFDGSCEDSAFPVGIKQEPDDGSYYPEASIPSSAIVGVNSGGQSFHYRIGAQGTISLSRSPRDQSFQHLSSFPPVNTLVESWKPHGDLSSRRSDGYPVLEYIPENVSSSTLRSVSTGSSRPSKICLVCGDEASGCHYGVVTCGSCKVFFKRAVEGQHNYLCAGRNDCIIDKIRRKNCPACRLQKCLQAGMNLGARKSKKLGKLKGLHEEQPQQPPPPPPQSPEEGTTYIAPTKEPSVNSALVPQLTSITHALTPSPAMILENIEPETVYAGYDNSKPDTAESLLSTLNRLAAKQMIQVVKWAKVLPGFKNLPLEDQITLIQYSWMCLSSFALSWRSYKHTNSQLLYFAPDLVFNEEKMHQSAMYELCQGMRQISLQFVRLQLTFEEYSIMKVLLLLSTVPKDGLKSQAAFEEMRTNYIKELRKMVTKCPNSSGQSWQRFYQLTKLLDSMHDLVSDLLEFCFYTFRESQALKVEFPAMLVEIITDQLPKVESGNAKPLYFHRK.

Positions 1–603 (METKGYHSLP…STGSSRPSKI (603 aa)) are modulating. The segment covering 234–258 (SLTCSPSVENRGSRSHSPTHASNVG) has biased composition (polar residues). Disordered stretches follow at residues 234-331 (SLTC…ASTV) and 355-376 (AIQD…VPFP). A phosphoserine mark is found at Ser-250, Ser-259, Ser-283, Ser-287, and Ser-299. Low complexity-rich tracts occupy residues 259 to 300 (SPLS…VSSP) and 309 to 327 (SVSS…SSPT). 8 residues coordinate Zn(2+): Cys-604, Cys-607, Cys-621, Cys-624, Cys-640, Cys-646, Cys-656, and Cys-659. 2 consecutive NR C4-type zinc fingers follow at residues 604 to 624 (CLVC…CGSC) and 640 to 664 (CAGR…LQKC). Positions 604-669 (CLVCGDEASG…RLQKCLQAGM (66 aa)) form a DNA-binding region, nuclear receptor. The interval 670-722 (NLGARKSKKLGKLKGLHEEQPQQPPPPPPQSPEEGTTYIAPTKEPSVNSALVP) is hinge. The interval 684–710 (GLHEEQPQQPPPPPPQSPEEGTTYIAP) is disordered. Over residues 691–700 (QQPPPPPPQS) the composition is skewed to pro residues. One can recognise an NR LBD domain in the interval 723-961 (QLTSITHALT…EFPAMLVEII (239 aa)). Residues Asn-767 and Gln-773 each coordinate 21-hydroxyprogesterone. The aldosterone site is built by Asn-767 and Gln-773. Positions 767 and 773 each coordinate progesterone. Residues 779–782 (KWAK) form an important for coactivator binding region. Arg-814 and Thr-942 together coordinate 21-hydroxyprogesterone. Residues Arg-814 and Thr-942 each contribute to the aldosterone site. Residues Arg-814 and Thr-942 each coordinate progesterone.

This sequence belongs to the nuclear hormone receptor family. NR3 subfamily. As to quaternary structure, heteromultimeric cytoplasmic complex with HSP90, HSP70, and FKBP4, in the absence of ligand. After ligand binding, it translocates to the nucleus and binds to DNA as a homodimer and as a heterodimer with NR3C1. Binds the coactivator NCOA2. May interact with HSD11B2 in the absence of ligand. Binds the coactivators NCOA1, TIF1 and NRIP1. Post-translationally, phosphorylated. As to expression, detected in liver, brain, heart, kidney, colon, aorta, hippocampus, hypothalamus and adrenal fasciculata.

The protein resides in the cytoplasm. It localises to the nucleus. Its subcellular location is the endoplasmic reticulum membrane. In terms of biological role, receptor for both mineralocorticoids (MC) such as aldosterone and glucocorticoids (GC) such as corticosterone or cortisol. Binds to mineralocorticoid response elements (MRE) and transactivates target genes. The effect of MC is to increase ion and water transport and thus raise extracellular fluid volume and blood pressure and lower potassium levels. The sequence is that of Mineralocorticoid receptor (Nr3c2) from Rattus norvegicus (Rat).